Here is a 237-residue protein sequence, read N- to C-terminus: Phosphoribosylaminoimidazole-succinocarboxamide synthase (237 aa).

This sequence belongs to the SAICAR synthetase family.

It catalyses the reaction 5-amino-1-(5-phospho-D-ribosyl)imidazole-4-carboxylate + L-aspartate + ATP = (2S)-2-[5-amino-1-(5-phospho-beta-D-ribosyl)imidazole-4-carboxamido]succinate + ADP + phosphate + 2 H(+). Its pathway is purine metabolism; IMP biosynthesis via de novo pathway; 5-amino-1-(5-phospho-D-ribosyl)imidazole-4-carboxamide from 5-amino-1-(5-phospho-D-ribosyl)imidazole-4-carboxylate: step 1/2. This Serratia proteamaculans (strain 568) protein is Phosphoribosylaminoimidazole-succinocarboxamide synthase.